The following is a 90-amino-acid chain: FMRFamide-like neuropeptides 27 (90 aa).

The first 24 residues, Met1 to Ala24, serve as a signal peptide directing secretion. Residues Gln25–Glu36 constitute a propeptide that is removed on maturation. Residue Phe61 is modified to Phenylalanine amide. Residues Ser65 to Leu90 constitute a propeptide that is removed on maturation.

The protein belongs to the FARP (FMRFamide related peptide) family.

It localises to the secreted. In terms of biological role, FMRFamides and FMRFamide-like peptides are neuropeptides. This is FMRFamide-like neuropeptides 27 from Caenorhabditis briggsae.